Here is a 198-residue protein sequence, read N- to C-terminus: ATP-dependent Clp protease proteolytic subunit (198 aa).

The active-site Nucleophile is the S98. The active site involves H123.

This sequence belongs to the peptidase S14 family. In terms of assembly, fourteen ClpP subunits assemble into 2 heptameric rings which stack back to back to give a disk-like structure with a central cavity, resembling the structure of eukaryotic proteasomes.

Its subcellular location is the cytoplasm. The enzyme catalyses Hydrolysis of proteins to small peptides in the presence of ATP and magnesium. alpha-casein is the usual test substrate. In the absence of ATP, only oligopeptides shorter than five residues are hydrolyzed (such as succinyl-Leu-Tyr-|-NHMec, and Leu-Tyr-Leu-|-Tyr-Trp, in which cleavage of the -Tyr-|-Leu- and -Tyr-|-Trp bonds also occurs).. In terms of biological role, cleaves peptides in various proteins in a process that requires ATP hydrolysis. Has a chymotrypsin-like activity. Plays a major role in the degradation of misfolded proteins. This Halothermothrix orenii (strain H 168 / OCM 544 / DSM 9562) protein is ATP-dependent Clp protease proteolytic subunit.